The sequence spans 388 residues: Flap endonuclease 1 (388 aa).

Residues 1-104 (MGILGLSKLI…GELAKRAERR (104 aa)) form an N-domain region. Position 34 (D34) interacts with Mg(2+). DNA contacts are provided by R47 and R70. D86, E158, E160, D179, and D181 together coordinate Mg(2+). The tract at residues 122–253 (EIEKFNRRLV…KRAIELIKTY (132 aa)) is I-domain. Residue E158 participates in DNA binding. Positions 231 and 233 each coordinate DNA. D233 is a binding site for Mg(2+). An interaction with PCNA region spans residues 336–344 (TQVRLDSFF). The interval 351–388 (PNATAAAKRKAEEIKKSANNKKAKTSGGSGAARGRRPK) is disordered.

Belongs to the XPG/RAD2 endonuclease family. FEN1 subfamily. As to quaternary structure, interacts with PCNA. Three molecules of FEN1 bind to one PCNA trimer with each molecule binding to one PCNA monomer. PCNA stimulates the nuclease activity without altering cleavage specificity. Mg(2+) is required as a cofactor. In terms of processing, phosphorylated. Phosphorylation upon DNA damage induces relocalization to the nuclear plasma.

The protein resides in the nucleus. It localises to the nucleolus. The protein localises to the nucleoplasm. Its subcellular location is the mitochondrion. Its function is as follows. Structure-specific nuclease with 5'-flap endonuclease and 5'-3' exonuclease activities involved in DNA replication and repair. During DNA replication, cleaves the 5'-overhanging flap structure that is generated by displacement synthesis when DNA polymerase encounters the 5'-end of a downstream Okazaki fragment. It enters the flap from the 5'-end and then tracks to cleave the flap base, leaving a nick for ligation. Also involved in the long patch base excision repair (LP-BER) pathway, by cleaving within the apurinic/apyrimidinic (AP) site-terminated flap. Acts as a genome stabilization factor that prevents flaps from equilibrating into structures that lead to duplications and deletions. Also possesses 5'-3' exonuclease activity on nicked or gapped double-stranded DNA, and exhibits RNase H activity. Also involved in replication and repair of rDNA and in repairing mitochondrial DNA. This chain is Flap endonuclease 1, found in Drosophila mojavensis (Fruit fly).